A 593-amino-acid polypeptide reads, in one-letter code: NADH-quinone oxidoreductase subunit C/D (593 aa).

The NADH dehydrogenase I subunit C stretch occupies residues 1-184 (MTTGSALYIP…DPFSLNLAKQ (184 aa)). The tract at residues 208–593 (DYMFLNLGPN…IDFVMADVDR (386 aa)) is NADH dehydrogenase I subunit D.

In the N-terminal section; belongs to the complex I 30 kDa subunit family. It in the C-terminal section; belongs to the complex I 49 kDa subunit family. NDH-1 is composed of 13 different subunits. Subunits NuoB, CD, E, F, and G constitute the peripheral sector of the complex.

It localises to the cell inner membrane. It carries out the reaction a quinone + NADH + 5 H(+)(in) = a quinol + NAD(+) + 4 H(+)(out). Its function is as follows. NDH-1 shuttles electrons from NADH, via FMN and iron-sulfur (Fe-S) centers, to quinones in the respiratory chain. The immediate electron acceptor for the enzyme in this species is believed to be ubiquinone. Couples the redox reaction to proton translocation (for every two electrons transferred, four hydrogen ions are translocated across the cytoplasmic membrane), and thus conserves the redox energy in a proton gradient. This is NADH-quinone oxidoreductase subunit C/D from Pseudomonas fluorescens (strain ATCC BAA-477 / NRRL B-23932 / Pf-5).